A 476-amino-acid chain; its full sequence is Bifunctional protein HldE (476 aa).

Residues methionine 1 to threonine 318 form a ribokinase region. Asparagine 195–glutamate 198 contributes to the ATP binding site. Residue aspartate 264 is part of the active site. Residues methionine 344–glutamine 476 are cytidylyltransferase.

It in the N-terminal section; belongs to the carbohydrate kinase PfkB family. In the C-terminal section; belongs to the cytidylyltransferase family. In terms of assembly, homodimer.

The enzyme catalyses D-glycero-beta-D-manno-heptose 7-phosphate + ATP = D-glycero-beta-D-manno-heptose 1,7-bisphosphate + ADP + H(+). It carries out the reaction D-glycero-beta-D-manno-heptose 1-phosphate + ATP + H(+) = ADP-D-glycero-beta-D-manno-heptose + diphosphate. Its pathway is nucleotide-sugar biosynthesis; ADP-L-glycero-beta-D-manno-heptose biosynthesis; ADP-L-glycero-beta-D-manno-heptose from D-glycero-beta-D-manno-heptose 7-phosphate: step 1/4. It participates in nucleotide-sugar biosynthesis; ADP-L-glycero-beta-D-manno-heptose biosynthesis; ADP-L-glycero-beta-D-manno-heptose from D-glycero-beta-D-manno-heptose 7-phosphate: step 3/4. In terms of biological role, catalyzes the phosphorylation of D-glycero-D-manno-heptose 7-phosphate at the C-1 position to selectively form D-glycero-beta-D-manno-heptose-1,7-bisphosphate. Its function is as follows. Catalyzes the ADP transfer from ATP to D-glycero-beta-D-manno-heptose 1-phosphate, yielding ADP-D-glycero-beta-D-manno-heptose. This is Bifunctional protein HldE from Enterobacter sp. (strain 638).